A 465-amino-acid polypeptide reads, in one-letter code: uncharacterized protein (465 aa).

An RAMA domain is found at 6–91; it reads NVTLSNLIDF…LKLKREYLFR (86 aa). 2 disordered regions span residues 95 to 377 and 392 to 465; these read TGKN…SNNQ and YNQQ…KSKS. Over residues 117–137 the composition is skewed to low complexity; that stretch reads PQQQQQQQQQQQQQQQQQQQP. The span at 156-169 shows a compositional bias: acidic residues; that stretch reads ETSDQDIDNDDDDA. The segment covering 177–190 has biased composition (low complexity); the sequence is TTTTTTTTTTTTTT. The segment covering 208–220 has biased composition (basic and acidic residues); sequence PKEKKKEKKENIL. Residues 214–242 are a coiled coil; that stretch reads EKKENILTKKKQQSLQYQQQLQLLQRQNS. A compositionally biased stretch (low complexity) spans 226–263; it reads QSLQYQQQLQLLQRQNSPPSVSPSSSTSTSSSTSSPAS. Polar residues predominate over residues 264–294; sequence NQIFNSFGPNSQNHNQYGINYNSQQHQPQQY. Residues 295 to 376 are compositionally biased toward low complexity; the sequence is NNNNNNNNNN…NNNINNNSNN (82 aa). The span at 392–407 shows a compositional bias: polar residues; it reads YNQQNPPKHQYPNNFL. A compositionally biased stretch (low complexity) spans 424 to 442; sequence NQSQNQNQNQNQNQNQNQK. Positions 443-465 are enriched in basic residues; the sequence is SKSKSKSKSKFKSKSKSKSKSKS.

This is an uncharacterized protein from Dictyostelium discoideum (Social amoeba).